Consider the following 481-residue polypeptide: Cysteine--tRNA ligase (481 aa).

Cys29 is a binding site for Zn(2+). The 'HIGH' region motif lies at 31-41; that stretch reads PTVYDYSHLGH. Positions 210, 235, and 239 each coordinate Zn(2+). Residues 272–276 carry the 'KMSKS' region motif; that stretch reads KMSKS. Lys275 is an ATP binding site.

Belongs to the class-I aminoacyl-tRNA synthetase family. In terms of assembly, monomer. Zn(2+) serves as cofactor.

The protein localises to the cytoplasm. The enzyme catalyses tRNA(Cys) + L-cysteine + ATP = L-cysteinyl-tRNA(Cys) + AMP + diphosphate. The protein is Cysteine--tRNA ligase of Anaeromyxobacter sp. (strain K).